The following is a 210-amino-acid chain: Thymidylate kinase (210 aa).

Residue 10-17 coordinates ATP; the sequence is GPEGAGKS.

It belongs to the thymidylate kinase family.

It catalyses the reaction dTMP + ATP = dTDP + ADP. Functionally, phosphorylation of dTMP to form dTDP in both de novo and salvage pathways of dTTP synthesis. The sequence is that of Thymidylate kinase from Pseudomonas fluorescens (strain ATCC BAA-477 / NRRL B-23932 / Pf-5).